The primary structure comprises 179 residues: Orotate phosphoribosyltransferase (179 aa).

Residues Arg24, Arg89, Lys90, Lys93, and 115–123 (EDVITTGGA) contribute to the 5-phospho-alpha-D-ribose 1-diphosphate site. Orotate is bound by residues Thr119 and Arg147.

This sequence belongs to the purine/pyrimidine phosphoribosyltransferase family. PyrE subfamily. As to quaternary structure, homodimer. It depends on Mg(2+) as a cofactor.

It catalyses the reaction orotidine 5'-phosphate + diphosphate = orotate + 5-phospho-alpha-D-ribose 1-diphosphate. It participates in pyrimidine metabolism; UMP biosynthesis via de novo pathway; UMP from orotate: step 1/2. Catalyzes the transfer of a ribosyl phosphate group from 5-phosphoribose 1-diphosphate to orotate, leading to the formation of orotidine monophosphate (OMP). The chain is Orotate phosphoribosyltransferase from Nocardioides sp. (strain ATCC BAA-499 / JS614).